A 185-amino-acid chain; its full sequence is Peptidyl-tRNA hydrolase (185 aa).

Tyrosine 14 serves as a coordination point for tRNA. The active-site Proton acceptor is histidine 19. 3 residues coordinate tRNA: tyrosine 64, asparagine 66, and asparagine 112.

This sequence belongs to the PTH family. As to quaternary structure, monomer.

The protein resides in the cytoplasm. It carries out the reaction an N-acyl-L-alpha-aminoacyl-tRNA + H2O = an N-acyl-L-amino acid + a tRNA + H(+). In terms of biological role, hydrolyzes ribosome-free peptidyl-tRNAs (with 1 or more amino acids incorporated), which drop off the ribosome during protein synthesis, or as a result of ribosome stalling. Its function is as follows. Catalyzes the release of premature peptidyl moieties from peptidyl-tRNA molecules trapped in stalled 50S ribosomal subunits, and thus maintains levels of free tRNAs and 50S ribosomes. This is Peptidyl-tRNA hydrolase from Lactobacillus acidophilus (strain ATCC 700396 / NCK56 / N2 / NCFM).